Here is a 498-residue protein sequence, read N- to C-terminus: Protein disulfide-isomerase (498 aa).

Residues 1-23 (MASFRGSIWYCIFVLSLIAVAIS) form the signal peptide. Thioredoxin domains follow at residues 24–143 (AAES…KQSG) and 339–484 (YLKA…KNRD). Residue asparagine 41 is glycosylated (N-linked (GlcNAc...) asparagine). Residues cysteine 61, cysteine 64, cysteine 406, and cysteine 409 each act as nucleophile in the active site. 2 disulfide bridges follow: cysteine 61–cysteine 64 and cysteine 406–cysteine 409. The Prevents secretion from ER motif lies at 495 to 498 (KDEL).

It belongs to the protein disulfide isomerase family.

The protein resides in the endoplasmic reticulum lumen. It catalyses the reaction Catalyzes the rearrangement of -S-S- bonds in proteins.. In terms of biological role, participates in the folding of proteins containing disulfide bonds, may be involved in glycosylation, prolyl hydroxylation and triglyceride transfer. The chain is Protein disulfide-isomerase from Ricinus communis (Castor bean).